A 933-amino-acid chain; its full sequence is Dual 3',5'-cyclic-AMP and -GMP phosphodiesterase 11A (933 aa).

Residues His-42 to Phe-125 are disordered. A phosphoserine mark is found at Ser-162, Ser-163, and Ser-239. GAF domains lie at Asp-217–Ile-370 and Asp-402–Ile-558. 3',5'-cyclic GMP is bound at residue Ser-424. Positions Ser-588–Arg-912 constitute a PDEase domain. His-664 functions as the Proton donor in the catalytic mechanism. 4 residues coordinate a divalent metal cation: His-668, His-704, Asp-705, and Asp-816.

This sequence belongs to the cyclic nucleotide phosphodiesterase family. It depends on a divalent metal cation as a cofactor. In terms of tissue distribution, isoform 1 is present in prostate, pituitary, heart and liver. It is however not present in testis nor in penis, suggesting that weak inhibition by Tadalafil (Cialis) is not relevant (at protein level). Isoform 2 may be expressed in testis. Isoform 4 is expressed in adrenal cortex.

The protein localises to the cytoplasm. It localises to the cytosol. It catalyses the reaction 3',5'-cyclic GMP + H2O = GMP + H(+). The catalysed reaction is 3',5'-cyclic AMP + H2O = AMP + H(+). With respect to regulation, inhibited by 3-isobutyl-1-methylxanthine (IBMX), zaprinast and dipyridamole. cGMP acts as an allosteric activator. Weakly inhibited by Sildenafil (Viagra) and Tadalafil (Cialis); however, the fact that the protein is probably absent from testis, suggests that it is not biologically relevant and is not related with erectile dysfunction. Functionally, plays a role in signal transduction by regulating the intracellular concentration of cyclic nucleotides cAMP and cGMP. Catalyzes the hydrolysis of both cAMP and cGMP to 5'-AMP and 5'-GMP, respectively. In Homo sapiens (Human), this protein is Dual 3',5'-cyclic-AMP and -GMP phosphodiesterase 11A.